Reading from the N-terminus, the 215-residue chain is uncharacterized protein (215 aa).

Active-site charge relay system residues include S114, D162, and H194.

Belongs to the AB hydrolase superfamily. AB hydrolase 2 family.

This is an uncharacterized protein from Rickettsia typhi (strain ATCC VR-144 / Wilmington).